Consider the following 390-residue polypeptide: Sorting nexin C1711.11 (390 aa).

In terms of domain architecture, PX spans 1-123 (MLKCTIKNEQ…QFLENNSWKS (123 aa)). A 1,2-diacyl-sn-glycero-3-phospho-(1D-myo-inositol-3-phosphate) is bound by residues Arg-44, Lys-70, and Arg-89.

This sequence belongs to the sorting nexin family.

It is found in the cytoplasm. Its subcellular location is the membrane. In Schizosaccharomyces pombe (strain 972 / ATCC 24843) (Fission yeast), this protein is Sorting nexin C1711.11.